The following is a 421-amino-acid chain: Growth arrest-specific protein 7 (421 aa).

Residues 1-117 (MATALQKPGM…SPGRKQSKEN (117 aa)) are disordered. Residues 22–55 (VILPPGWHSYLSPQGRRYYVNTTTNETTWERPSS) enclose the WW domain. The span at 41–52 (VNTTTNETTWER) shows a compositional bias: polar residues. Over residues 53-65 (PSSSPGISASPAP) the composition is skewed to low complexity. A phosphoserine mark is found at Ser-62 and Ser-108. Positions 95–117 (RKSTGDSQNLGSSSPGRKQSKEN) are enriched in polar residues. The F-BAR domain maps to 141–401 (TEWSYCDYFW…LLRKVDPAKD (261 aa)). Positions 254–328 (ENFKKDMKKC…RKSTQAGDDL (75 aa)) form a coiled coil.

As to expression, expressed abundantly in brain with lower levels in heart and testis. In the brain, expressed prominently in the Purkinje layer of the cerebellum, moderately in hippocampus, and less extensively in cerebral cortex and caudate putamen.

The protein resides in the cytoplasm. Functionally, may play a role in promoting maturation and morphological differentiation of cerebellar neurons. This Mus musculus (Mouse) protein is Growth arrest-specific protein 7 (Gas7).